The chain runs to 98 residues: NADH-ubiquinone oxidoreductase chain 4L (98 aa).

Helical transmembrane passes span 1-21, 29-49, and 61-81; these read MSMV…GLLM, SLLC…VAIL, and IILL…LVMV.

This sequence belongs to the complex I subunit 4L family. In terms of assembly, core subunit of respiratory chain NADH dehydrogenase (Complex I) which is composed of 45 different subunits.

The protein resides in the mitochondrion inner membrane. It carries out the reaction a ubiquinone + NADH + 5 H(+)(in) = a ubiquinol + NAD(+) + 4 H(+)(out). Its function is as follows. Core subunit of the mitochondrial membrane respiratory chain NADH dehydrogenase (Complex I) which catalyzes electron transfer from NADH through the respiratory chain, using ubiquinone as an electron acceptor. Part of the enzyme membrane arm which is embedded in the lipid bilayer and involved in proton translocation. In Felis catus (Cat), this protein is NADH-ubiquinone oxidoreductase chain 4L (MT-ND4L).